Reading from the N-terminus, the 409-residue chain is Elongation factor Tu, chloroplastic (409 aa).

The 205-residue stretch at 10–214 (KPHVNIGTIG…AVDEYIPTPE (205 aa)) folds into the tr-type G domain. Residues 19 to 26 (GHVDHGKT) are G1. Residue 19–26 (GHVDHGKT) coordinates GTP. Thr26 serves as a coordination point for Mg(2+). Positions 60–64 (GITIN) are G2. The G3 stretch occupies residues 81–84 (DCPG). Residues 81–85 (DCPGH) and 136–139 (NKED) contribute to the GTP site. The G4 stretch occupies residues 136–139 (NKED). The segment at 174–176 (SAL) is G5.

Belongs to the TRAFAC class translation factor GTPase superfamily. Classic translation factor GTPase family. EF-Tu/EF-1A subfamily.

It is found in the plastid. Its subcellular location is the chloroplast. The catalysed reaction is GTP + H2O = GDP + phosphate + H(+). GTP hydrolase that promotes the GTP-dependent binding of aminoacyl-tRNA to the A-site of ribosomes during protein biosynthesis. The polypeptide is Elongation factor Tu, chloroplastic (tufA) (Trieres chinensis (Marine centric diatom)).